Here is a 355-residue protein sequence, read N- to C-terminus: Isopentenyl-diphosphate delta-isomerase (355 aa).

Residue 9–10 participates in substrate binding; it reads RK. Residues 67-69, Ser97, and Asn125 contribute to the FMN site; that span reads AIT. 97 to 99 contributes to the substrate binding site; the sequence is SQR. A substrate-binding site is contributed by Gln161. A Mg(2+)-binding site is contributed by Glu162. FMN contacts are provided by residues Lys197, Thr227, 276–278, and 297–298; these read GIR and AL.

Belongs to the IPP isomerase type 2 family. As to quaternary structure, homooctamer. Dimer of tetramers. FMN is required as a cofactor. The cofactor is NADPH. It depends on Mg(2+) as a cofactor.

The protein localises to the cytoplasm. The enzyme catalyses isopentenyl diphosphate = dimethylallyl diphosphate. Its function is as follows. Involved in the biosynthesis of isoprenoids. Catalyzes the 1,3-allylic rearrangement of the homoallylic substrate isopentenyl (IPP) to its allylic isomer, dimethylallyl diphosphate (DMAPP). In Methanococcus maripaludis (strain DSM 14266 / JCM 13030 / NBRC 101832 / S2 / LL), this protein is Isopentenyl-diphosphate delta-isomerase.